The primary structure comprises 517 residues: Crotonobetaine/carnitine--CoA ligase (517 aa).

Belongs to the ATP-dependent AMP-binding enzyme family.

It carries out the reaction 4-(trimethylamino)butanoate + ATP + CoA = 4-(trimethylamino)butanoyl-CoA + AMP + diphosphate. The catalysed reaction is crotonobetaine + ATP + CoA = crotonobetainyl-CoA + AMP + diphosphate. The enzyme catalyses (R)-carnitine + ATP + CoA = (R)-carnitinyl-CoA + AMP + diphosphate. Its pathway is amine and polyamine metabolism; carnitine metabolism. In terms of biological role, catalyzes the transfer of CoA to carnitine, generating the initial carnitinyl-CoA needed for the CaiB reaction cycle. Also has activity toward crotonobetaine and gamma-butyrobetaine. This Escherichia coli O157:H7 protein is Crotonobetaine/carnitine--CoA ligase.